A 177-amino-acid chain; its full sequence is Chorismate pyruvate-lyase (177 aa).

Residues methionine 37, arginine 79, leucine 117, and glutamate 159 each coordinate substrate.

The protein belongs to the UbiC family. In terms of assembly, monomer.

The protein resides in the cytoplasm. It catalyses the reaction chorismate = 4-hydroxybenzoate + pyruvate. It functions in the pathway cofactor biosynthesis; ubiquinone biosynthesis. Functionally, removes the pyruvyl group from chorismate, with concomitant aromatization of the ring, to provide 4-hydroxybenzoate (4HB) for the ubiquinone pathway. This chain is Chorismate pyruvate-lyase, found in Sodalis glossinidius (strain morsitans).